A 41-amino-acid polypeptide reads, in one-letter code: Large ribosomal subunit protein bL36 (41 aa).

This sequence belongs to the bacterial ribosomal protein bL36 family.

This chain is Large ribosomal subunit protein bL36, found in Xanthomonas axonopodis pv. citri (strain 306).